The primary structure comprises 226 residues: uncharacterized protein (226 aa).

The chain crosses the membrane as a helical span at residues 121 to 141 (YLIGNIIGLPLTIPFILIPLI).

It to yeast YDL183c.

The protein resides in the membrane. This is an uncharacterized protein from Schizosaccharomyces pombe (strain 972 / ATCC 24843) (Fission yeast).